A 655-amino-acid chain; its full sequence is Bifunctional lysine-specific demethylase and histidyl-hydroxylase NO66 (655 aa).

A compositionally biased stretch (polar residues) spans 1–16 (MEKVTNSAAAKPQGNN). 2 disordered regions span residues 1-48 (MEKV…LSDM) and 67-122 (EDTD…QGAS). Low complexity predominate over residues 76-86 (STSSKEAAAAK). The span at 87-96 (TADHERRLQA) shows a compositional bias: basic and acidic residues. Ser131 carries the post-translational modification Phosphoserine. At Thr137 the chain carries Phosphothreonine. At Ser138 the chain carries Phosphoserine. Positions 185-210 (KAPEEGNNNNDEKEMSTETSEPHKTD) are disordered. Positions 194 to 210 (NDEKEMSTETSEPHKTD) are enriched in basic and acidic residues. The region spanning 307–452 (CSIRLLHASA…NLLETLMPMV (146 aa)) is the JmjC domain. Fe cation is bound by residues His353, Asp355, and His418.

The protein belongs to the ROX family. NO66 subfamily. Fe(2+) is required as a cofactor.

The protein localises to the nucleus. It catalyses the reaction N(6),N(6)-dimethyl-L-lysyl(36)-[histone H3] + 2 2-oxoglutarate + 2 O2 = L-lysyl(36)-[histone H3] + 2 formaldehyde + 2 succinate + 2 CO2. Functionally, oxygenase that can act as both a histone lysine demethylase and a ribosomal histidine hydroxylase. Specifically demethylates 'Lys-4' (H3K4me) and 'Lys-36' (H3K36me) of histone H3, thereby playing a central role in histone code. In Drosophila sechellia (Fruit fly), this protein is Bifunctional lysine-specific demethylase and histidyl-hydroxylase NO66.